The chain runs to 489 residues: Cytochrome P450 2C70 (489 aa).

Residues 1–27 form the signal peptide; that stretch reads MALFIFLGIWLSCFLFLFLWNQHRGRG. Cys434 contributes to the heme binding site.

Belongs to the cytochrome P450 family. The cofactor is heme. In terms of tissue distribution, expressed in liver.

The protein resides in the endoplasmic reticulum membrane. It localises to the microsome membrane. It catalyses the reaction chenodeoxycholate + reduced [NADPH--hemoprotein reductase] + O2 = alpha-muricholate + oxidized [NADPH--hemoprotein reductase] + H2O + H(+). It carries out the reaction ursodeoxycholate + reduced [NADPH--hemoprotein reductase] + O2 = beta-muricholate + oxidized [NADPH--hemoprotein reductase] + H2O + H(+). A cytochrome P450 monooxygenase involved in muricholic acid (MCA) synthesis. Hydroxylates at the 6-beta position two major bile acids, chenodeoxycholic acid (CDCA) and ursodeoxycholic acid (UDCA) to form alpha-MCA and beta-MCA, respectively. May regulate NR1H4/farnesoid X receptor signaling, as taurine-conjugated MCAs are antagonists of NR1H4. Mechanistically, uses molecular oxygen inserting one oxygen atom into a substrate, and reducing the second into a water molecule, with two electrons provided by NADPH via cytochrome P450 reductase (CPR; NADPH-ferrihemoprotein reductase). This Mus musculus (Mouse) protein is Cytochrome P450 2C70.